The following is a 677-amino-acid chain: Testis-specific Y-encoded-like protein 2 (677 aa).

The tract at residues 1-54 is disordered; sequence MDRPDEGPPAKTPRLSSSEPRQRDLPPPPPPPLQRLPLPPPQQRPRPQEETEAA. Lys-11 is covalently cross-linked (Glycyl lysine isopeptide (Lys-Gly) (interchain with G-Cter in SUMO2)). Residue Ser-18 is modified to Phosphoserine. Positions 25 to 44 are enriched in pro residues; it reads LPPPPPPPLQRLPLPPPQQR. Residues Lys-158 and Lys-160 each participate in a glycyl lysine isopeptide (Lys-Gly) (interchain with G-Cter in SUMO2) cross-link. The disordered stretch occupies residues 175-202; that stretch reads KESVRRRQRRRRRRRKQRKAKESRERSA. The segment covering 178-193 has biased composition (basic residues); the sequence is VRRRQRRRRRRRKQRK. Thr-333 carries the post-translational modification Phosphothreonine. Positions 469–658 are disordered; it reads ANENLCDSEN…EVNSEDSDIQ (190 aa). Over residues 484–493 the composition is skewed to polar residues; it reads GYNTKITDNK. A compositionally biased stretch (basic and acidic residues) spans 509 to 525; sequence EKNTYDSEDSNSEKADG. A compositionally biased stretch (polar residues) spans 526 to 540; it reads DNTTLRDNQQVTNIQ. Composition is skewed to acidic residues over residues 543 to 581 and 606 to 627; these read SDSD…DDDD and DYEE…ETSE. The segment covering 639–650 has biased composition (basic and acidic residues); the sequence is DERIYGEERSEV. Phosphoserine occurs at positions 648, 652, and 655.

This sequence belongs to the nucleosome assembly protein (NAP) family. As to quaternary structure, interacts with histones. Interacts with CASK. Part of a complex containing CASK, TBR1 and TSPYL2. Post-translationally, phosphorylation at Thr-333 impairs function on cell proliferation. Present at high levels in the pituitary gland and at moderate levels in adrenal gland, brain, testis and ovary. In brain, expressed both in mature neurons and progenitor cells (at protein level).

The protein resides in the nucleus. It localises to the cytoplasm. Its function is as follows. Part of the CASK/TBR1/TSPYL2 transcriptional complex which modulates gene expression in response to neuronal synaptic activity, probably by facilitating nucleosome assembly. May inhibit cell proliferation by inducing p53-dependent CDKN1A expression. This Mus musculus (Mouse) protein is Testis-specific Y-encoded-like protein 2 (Tspyl2).